Reading from the N-terminus, the 268-residue chain is Tryptophan synthase alpha chain (268 aa).

Catalysis depends on proton acceptor residues Glu49 and Asp60.

It belongs to the TrpA family. As to quaternary structure, tetramer of two alpha and two beta chains.

The enzyme catalyses (1S,2R)-1-C-(indol-3-yl)glycerol 3-phosphate + L-serine = D-glyceraldehyde 3-phosphate + L-tryptophan + H2O. The protein operates within amino-acid biosynthesis; L-tryptophan biosynthesis; L-tryptophan from chorismate: step 5/5. In terms of biological role, the alpha subunit is responsible for the aldol cleavage of indoleglycerol phosphate to indole and glyceraldehyde 3-phosphate. This Pseudomonas aeruginosa (strain UCBPP-PA14) protein is Tryptophan synthase alpha chain.